The primary structure comprises 101 residues: Protein Tat (101 aa).

The interaction with human CREBBP stretch occupies residues 1–24; it reads MDPVDPNLEPWNHPGSQPKTPCNK. The segment at 1–48 is transactivation; sequence MDPVDPNLEPWNHPGSQPKTPCNKCFCKVCCWHCQVCFLNKGLGISYG. Residues Cys-22, Cys-25, and Cys-27 each contribute to the Zn(2+) site. Positions 22 to 37 are cysteine-rich; the sequence is CNKCFCKVCCWHCQVC. The residue at position 28 (Lys-28) is an N6-acetyllysine; by host PCAF. 4 residues coordinate Zn(2+): Cys-30, His-33, Cys-34, and Cys-37. A core region spans residues 38–48; the sequence is FLNKGLGISYG. The segment covering 48-57 has biased composition (basic residues); that stretch reads GRKKRKHRRG. The tract at residues 48–101 is disordered; it reads GRKKRKHRRGTPQSSKGHQDPVPKQPLPTTRGNPTGPKESKKEVASKAEADQCD. The Nuclear localization signal, RNA-binding (TAR), and protein transduction motif lies at 49–57; that stretch reads RKKRKHRRG. The interval 49-86 is interaction with the host capping enzyme RNGTT; it reads RKKRKHRRGTPQSSKGHQDPVPKQPLPTTRGNPTGPKE. Lys-50 and Lys-51 each carry N6-acetyllysine; by host EP300 and GCN5L2. Position 52 is an asymmetric dimethylarginine; by host PRMT6 (Arg-52). Residue Lys-71 forms a Glycyl lysine isopeptide (Lys-Gly) (interchain with G-Cter in ubiquitin) linkage. A compositionally biased stretch (basic and acidic residues) spans 85–101; the sequence is KESKKEVASKAEADQCD.

This sequence belongs to the lentiviruses Tat family. Interacts with host CCNT1. Associates with the P-TEFb complex composed at least of Tat, P-TEFb (CDK9 and CCNT1), TAR RNA, RNA Pol II. Recruits the HATs CREBBP, TAF1/TFIID, EP300, PCAF and GCN5L2. Interacts with host KAT5/Tip60; this interaction targets the latter to degradation. Interacts with the host deacetylase SIRT1. Interacts with host capping enzyme RNGTT; this interaction stimulates RNGTT. Binds to host KDR, and to the host integrins ITGAV/ITGB3 and ITGA5/ITGB1. Interacts with host KPNB1/importin beta-1 without previous binding to KPNA1/importin alpha-1. Interacts with EIF2AK2. Interacts with host nucleosome assembly protein NAP1L1; this interaction may be required for the transport of Tat within the nucleus, since the two proteins interact at the nuclear rim. Interacts with host C1QBP/SF2P32; this interaction involves lysine-acetylated Tat. Interacts with the host chemokine receptors CCR2, CCR3 and CXCR4. Interacts with host DPP4/CD26; this interaction may trigger an anti-proliferative effect. Interacts with host LDLR. Interacts with the host extracellular matrix metalloproteinase MMP1. Interacts with host PRMT6; this interaction mediates Tat's methylation. Interacts with, and is ubiquitinated by MDM2/Hdm2. Interacts with host PSMC3 and HTATIP2. Interacts with STAB1; this interaction may overcome SATB1-mediated repression of IL2 and IL2RA (interleukin) in T cells by binding to the same domain than HDAC1. Interacts (when acetylated) with human CDK13, thereby increasing HIV-1 mRNA splicing and promoting the production of the doubly spliced HIV-1 protein Nef. Interacts with host TBP; this interaction modulates the activity of transcriptional pre-initiation complex. Interacts with host RELA. Interacts with host PLSCR1; this interaction negatively regulates Tat transactivation activity by altering its subcellular distribution. Asymmetrical arginine methylation by host PRMT6 seems to diminish the transactivation capacity of Tat and affects the interaction with host CCNT1. In terms of processing, acetylation by EP300, CREBBP, GCN5L2/GCN5 and PCAF regulates the transactivation activity of Tat. EP300-mediated acetylation of Lys-50 promotes dissociation of Tat from the TAR RNA through the competitive binding to PCAF's bromodomain. In addition, the non-acetylated Tat's N-terminus can also interact with PCAF. PCAF-mediated acetylation of Lys-28 enhances Tat's binding to CCNT1. Lys-50 is deacetylated by SIRT1. Post-translationally, polyubiquitination by host MDM2 does not target Tat to degradation, but activates its transactivation function and fosters interaction with CCNT1 and TAR RNA. Phosphorylated by EIF2AK2 on serine and threonine residues adjacent to the basic region important for TAR RNA binding and function. Phosphorylation of Tat by EIF2AK2 is dependent on the prior activation of EIF2AK2 by dsRNA.

The protein localises to the host nucleus. It localises to the host nucleolus. Its subcellular location is the host cytoplasm. It is found in the secreted. Functionally, transcriptional activator that increases RNA Pol II processivity, thereby increasing the level of full-length viral transcripts. Recognizes a hairpin structure at the 5'-LTR of the nascent viral mRNAs referred to as the transactivation responsive RNA element (TAR) and recruits the cyclin T1-CDK9 complex (P-TEFb complex) that will in turn hyperphosphorylate the RNA polymerase II to allow efficient elongation. The CDK9 component of P-TEFb and other Tat-activated kinases hyperphosphorylate the C-terminus of RNA Pol II that becomes stabilized and much more processive. Other factors such as HTATSF1/Tat-SF1, SUPT5H/SPT5, and HTATIP2 are also important for Tat's function. Besides its effect on RNA Pol II processivity, Tat induces chromatin remodeling of proviral genes by recruiting the histone acetyltransferases (HATs) CREBBP, EP300 and PCAF to the chromatin. This also contributes to the increase in proviral transcription rate, especially when the provirus integrates in transcriptionally silent region of the host genome. To ensure maximal activation of the LTR, Tat mediates nuclear translocation of NF-kappa-B by interacting with host RELA. Through its interaction with host TBP, Tat may also modulate transcription initiation. Tat can reactivate a latently infected cell by penetrating in it and transactivating its LTR promoter. In the cytoplasm, Tat is thought to act as a translational activator of HIV-1 mRNAs. Its function is as follows. Extracellular circulating Tat can be endocytosed by surrounding uninfected cells via the binding to several surface receptors such as CD26, CXCR4, heparan sulfate proteoglycans (HSPG) or LDLR. Neurons are rarely infected, but they internalize Tat via their LDLR. Through its interaction with nuclear HATs, Tat is potentially able to control the acetylation-dependent cellular gene expression. Modulates the expression of many cellular genes involved in cell survival, proliferation or in coding for cytokines or cytokine receptors. Tat plays a role in T-cell and neurons apoptosis. Tat induced neurotoxicity and apoptosis probably contribute to neuroAIDS. Circulating Tat also acts as a chemokine-like and/or growth factor-like molecule that binds to specific receptors on the surface of the cells, affecting many cellular pathways. In the vascular system, Tat binds to ITGAV/ITGB3 and ITGA5/ITGB1 integrins dimers at the surface of endothelial cells and competes with bFGF for heparin-binding sites, leading to an excess of soluble bFGF. This Homo sapiens (Human) protein is Protein Tat.